A 358-amino-acid chain; its full sequence is Phenylalanine--tRNA ligase alpha subunit (358 aa).

Residue glutamate 258 coordinates Mg(2+).

The protein belongs to the class-II aminoacyl-tRNA synthetase family. Phe-tRNA synthetase alpha subunit type 1 subfamily. Tetramer of two alpha and two beta subunits. Requires Mg(2+) as cofactor.

The protein resides in the cytoplasm. It catalyses the reaction tRNA(Phe) + L-phenylalanine + ATP = L-phenylalanyl-tRNA(Phe) + AMP + diphosphate + H(+). The protein is Phenylalanine--tRNA ligase alpha subunit of Rhodospirillum rubrum (strain ATCC 11170 / ATH 1.1.1 / DSM 467 / LMG 4362 / NCIMB 8255 / S1).